Consider the following 1386-residue polypeptide: Roundabout homolog 3 (1386 aa).

An N-terminal signal peptide occupies residues 1–20 (MLRYLLKTLLQMNLFADSLA). At 21–891 (GDISNSSELL…VRLARVLREP (871 aa)) the chain is on the extracellular side. 4 N-linked (GlcNAc...) asparagine glycosylation sites follow: Asn-25, Asn-34, Asn-41, and Asn-53. 5 consecutive Ig-like C2-type domains span residues 64–160 (PRIV…ASLE), 166–253 (DDFR…AEVM), 258–342 (PSFL…GSLS), 347–440 (PQLV…ALLE), and 450–531 (PPVI…GEAT). Cys-85 and Cys-143 are disulfide-bonded. N-linked (GlcNAc...) asparagine glycosylation occurs at Asn-156. Disulfide bonds link Cys-187–Cys-236, Cys-279–Cys-326, and Cys-368–Cys-424. Asn-410, Asn-459, and Asn-503 each carry an N-linked (GlcNAc...) asparagine glycan. An intrachain disulfide couples Cys-472 to Cys-521. Disordered regions lie at residues 541-563 (DWGV…SQPV) and 639-662 (EPSP…EDPW). A compositionally biased stretch (pro residues) spans 546–559 (PDPPTEPSSPPGAP). 3 Fibronectin type-III domains span residues 558 to 652 (APSQ…TQDS), 671 to 766 (VAVR…IPEE), and 771 to 869 (PPQG…SPPD). 3 N-linked (GlcNAc...) asparagine glycosylation sites follow: Asn-784, Asn-813, and Asn-820. Residues 892–912 (AFLAGSGAACGALLLGLCAAL) traverse the membrane as a helical segment. Over 913–1386 (YWRRKQRKEL…PGQKRREEPR (474 aa)) the chain is Cytoplasmic. Disordered stretches follow at residues 965-989 (SWPH…NPDP), 1028-1310 (ELQT…AVPL), and 1327-1386 (SRPS…EEPR). A compositionally biased stretch (low complexity) spans 1067–1083 (VKLLGKPVQMPSLNWPE). Positions 1099–1112 (GPEEELEGSSEPEE) are enriched in acidic residues. Residues 1158–1169 (PSPPDPPQPPTD) show a composition bias toward pro residues. Composition is skewed to low complexity over residues 1178-1191 (RRVP…LSVS) and 1202-1229 (PAGL…SAPG). Ser-1263 is subject to Phosphoserine. The segment covering 1294–1304 (LERERSGERKA) has biased composition (basic and acidic residues). Positions 1333 to 1344 (SRGQGTSTCSTA) are enriched in polar residues. The span at 1345–1361 (GSNSSRGSSSSRGSRGP) shows a compositional bias: low complexity.

Belongs to the immunoglobulin superfamily. ROBO family. As to quaternary structure, monomer. Interacts (via Fibronectin type-III 1 domain) with NELL2 (via the EGF domains) with a 3:3 stoichiometry; this interaction promotes oligomerization of ROBO3 resulting in the repulsion of commissural axons in the midline.

The protein resides in the membrane. In terms of biological role, receptor involved in axon guidance during development. Acts as a multifunctional regulator of pathfinding that simultaneously mediates NELL2 repulsion, inhibits SLIT repulsion, and facilitates Netrin-1/NTN1 attraction. In spinal cord development plays a role in guiding commissural axons probably by preventing premature sensitivity to Slit proteins thus inhibiting Slit signaling through ROBO1/ROBO2. Binding OF NELL2 to the receptor ROBO3 promotes oligomerization of ROBO3, resulting in the repulsion of commissural axons in the midline. ROBO3 also indirectly boosts axon attraction to NTN1 without interacting with NTN1 itself. This is Roundabout homolog 3 from Homo sapiens (Human).